The primary structure comprises 101 residues: Large ribosomal subunit protein uL24 (101 aa).

It belongs to the universal ribosomal protein uL24 family. Part of the 50S ribosomal subunit.

Its function is as follows. One of two assembly initiator proteins, it binds directly to the 5'-end of the 23S rRNA, where it nucleates assembly of the 50S subunit. In terms of biological role, one of the proteins that surrounds the polypeptide exit tunnel on the outside of the subunit. The polypeptide is Large ribosomal subunit protein uL24 (Borreliella burgdorferi (strain ATCC 35210 / DSM 4680 / CIP 102532 / B31) (Borrelia burgdorferi)).